A 1019-amino-acid polypeptide reads, in one-letter code: Insulin-degrading enzyme (1019 aa).

His108 is a Zn(2+) binding site. Residue Glu111 is the Proton acceptor of the active site. Positions 112 and 189 each coordinate Zn(2+). Lys192 is modified (N6-succinyllysine). 359–363 (LVGGQ) is a substrate binding site. Arg429 contacts ATP. At Lys697 the chain carries N6-succinyllysine. A SlyX motif motif is present at residues 853–858 (EKPPHY). 895–901 (DKPKKLS) contributes to the ATP binding site.

The protein belongs to the peptidase M16 family. As to quaternary structure, homodimer. Can also form homotetramers. It depends on Zn(2+) as a cofactor.

It is found in the cytoplasm. Its subcellular location is the cytosol. The protein resides in the cell membrane. It localises to the secreted. It carries out the reaction Degradation of insulin, glucagon and other polypeptides. No action on proteins.. With respect to regulation, activated by ATP, other nucleotide triphosphates and small peptides. Inhibited by bacitracin. Its function is as follows. Plays a role in the cellular breakdown of insulin, APP peptides, IAPP peptides, natriuretic peptides, glucagon, bradykinin, kallidin, and other peptides, and thereby plays a role in intercellular peptide signaling. Substrate binding induces important conformation changes, making it possible to bind and degrade larger substrates, such as insulin. Contributes to the regulation of peptide hormone signaling cascades and regulation of blood glucose homeostasis via its role in the degradation of insulin, glucagon and IAPP. Plays a role in the degradation and clearance of APP-derived amyloidogenic peptides that are secreted by neurons and microglia. Degrades the natriuretic peptides ANP, BNP and CNP, inactivating their ability to raise intracellular cGMP. Also degrades an aberrant frameshifted 40-residue form of NPPA (fsNPPA) which is associated with familial atrial fibrillation in heterozygous patients. Involved in antigen processing. Produces both the N terminus and the C terminus of MAGEA3-derived antigenic peptide (EVDPIGHLY) that is presented to cytotoxic T lymphocytes by MHC class I. This chain is Insulin-degrading enzyme (IDE), found in Bos taurus (Bovine).